The sequence spans 76 residues: Small ribosomal subunit protein bS18 (76 aa).

Belongs to the bacterial ribosomal protein bS18 family. As to quaternary structure, part of the 30S ribosomal subunit. Forms a tight heterodimer with protein bS6.

Functionally, binds as a heterodimer with protein bS6 to the central domain of the 16S rRNA, where it helps stabilize the platform of the 30S subunit. The polypeptide is Small ribosomal subunit protein bS18 (Marinomonas sp. (strain MWYL1)).